Consider the following 645-residue polypeptide: Octopamine receptor Oamb (645 aa).

Topologically, residues 1-25 (MNETECEDLIKSVKWTEPANLISLA) are extracellular. N-linked (GlcNAc...) asparagine glycosylation occurs at asparagine 2. Residues 26–46 (VLEFINVLVIGGNCLVIAAVF) traverse the membrane as a helical segment. Residues 47 to 56 (CSNKLRSVTN) are Cytoplasmic-facing. The chain crosses the membrane as a helical span at residues 57-77 (FFIVNLAVADLLVGLAVLPFS). Over 78–94 (ATWEVFKVWIFGDLWCR) the chain is Extracellular. Cysteines 93 and 287 form a disulfide. A helical membrane pass occupies residues 95–115 (IWLAVDVWMCTASILNLCAIS). The Cytoplasmic segment spans residues 116 to 138 (LDRYVAVTRPVTYPSIMSTKKAK). A helical membrane pass occupies residues 139–159 (SLIAGIWVLSFFICFPPLVGW). The Extracellular portion of the chain corresponds to 160 to 295 (KDQKAVIQPT…KCELTNDRGY (136 aa)). Asparagine 174 is a glycosylation site (N-linked (GlcNAc...) asparagine). The tract at residues 190-212 (QLGLDSIKDQGEASLPPSPPHIG) is disordered. Residues 296–316 (VLYSALGSFYIPMFVMLFFYW) form a helical membrane-spanning segment. Topologically, residues 317-520 (RIYRAAVRTT…FRMETKAAKT (204 aa)) are cytoplasmic. 2 disordered regions span residues 358–386 (GRGS…PSPE) and 479–500 (RQSN…KKMG). The span at 369–385 (SNGSTQSTTTTLGTPSP) shows a compositional bias: low complexity. A helical transmembrane segment spans residues 521-541 (LAIIVGMFIFCWCPFFTMYII). The Extracellular portion of the chain corresponds to 542-551 (RPFCQDCVDP). Residues 552–572 (LLFSVLFWLGYCNSAVNPMIY) traverse the membrane as a helical segment. At 573–645 (ALFSKDFRFA…HHSEMSNDPR (73 aa)) the chain is on the cytoplasmic side. Positions 621–645 (TPSAAAHSFGDESELHHSEMSNDPR) are disordered. The span at 629-645 (FGDESELHHSEMSNDPR) shows a compositional bias: basic and acidic residues.

It belongs to the G-protein coupled receptor 1 family. As to expression, highly enriched in mushroom body neuropil and in the ellipsoid body (at protein level). Expressed in oviduct epithelium (at protein level). Expressed in the adult and larval brain, thoracic and abdominal ganglia, terminal cells of the larval tracheal system, muscle, mature eggs and reproductive system.

Its subcellular location is the cell membrane. In terms of biological role, receptor for octopamine (OA) which is a neurotransmitter, neurohormone and neuromodulator in invertebrates. Stimulates intracellular accumulation of cAMP and Ca(2+) following ligand binding. Required for ovulation. Following activation on mature follicle cells by OA, induces activity of the metalloprotease Mmp2 which leads to breakdown of the posterior follicle wall, resulting in ovulation. Ligand binding probably also leads to activation of CamKII which is also required for ovulation. Modulates sleep/wake behavior by acting in neurons of the pars intercerebralis to promote wakefulness. Plays a role in courtship conditioning where the courtship behavior of males rejected by already mated females is inhibited with further females. Required in the mushroom body for appetitive olfactory learning. Specifically conveys the short-term reinforcing effects of sweet taste. In insulin-producing cells of the brain, plays a role in inhibiting transcription of insulin-like peptide Ilp3. Also plays a role in social behavior by modulating male agression. The sequence is that of Octopamine receptor Oamb from Drosophila melanogaster (Fruit fly).